The primary structure comprises 520 residues: Legumin A2 (520 aa).

The first 22 residues, 1–22, serve as a signal peptide directing secretion; the sequence is MATKLLALSLSFCFLLLGGCFA. 2 cysteine pairs are disulfide-bonded: Cys-32/Cys-65 and Cys-108/Cys-342. One can recognise a Cupin type-1 1 domain in the interval 37–233; sequence LNALEPDNRI…AFNVNRHIVD (197 aa). Residues 250–339 are disordered; that stretch reads VKGGLSIISP…RRQGDNGLEE (90 aa). Residues 348 to 497 enclose the Cupin type-1 2 domain; the sequence is LNIGPSSSPD…TFNLQRNEAR (150 aa).

It belongs to the 11S seed storage protein (globulins) family. As to quaternary structure, hexamer; each subunit is composed of an acidic and a basic chain derived from a single precursor and linked by a disulfide bond.

Its function is as follows. This protein found in the seeds of many leguminous and non-leguminous plants is the source of sulfur-containing amino acids in seed meals. This chain is Legumin A2 (LEGA2), found in Pisum sativum (Garden pea).